The sequence spans 536 residues: Phosphoenolpyruvate carboxykinase (ATP) (536 aa).

Substrate-binding residues include R61, Y195, and K201. Residues K201, H220, and 236 to 244 contribute to the ATP site; that span reads GLSGTGKTT. Mn(2+)-binding residues include K201 and H220. D257 is a Mn(2+) binding site. Residues E285, R322, and T447 each coordinate ATP. R322 is a substrate binding site.

This sequence belongs to the phosphoenolpyruvate carboxykinase (ATP) family. The cofactor is Mn(2+).

It is found in the cytoplasm. It catalyses the reaction oxaloacetate + ATP = phosphoenolpyruvate + ADP + CO2. Its pathway is carbohydrate biosynthesis; gluconeogenesis. In terms of biological role, involved in the gluconeogenesis. Catalyzes the conversion of oxaloacetate (OAA) to phosphoenolpyruvate (PEP) through direct phosphoryl transfer between the nucleoside triphosphate and OAA. The sequence is that of Phosphoenolpyruvate carboxykinase (ATP) from Agrobacterium fabrum (strain C58 / ATCC 33970) (Agrobacterium tumefaciens (strain C58)).